Here is a 212-residue protein sequence, read N- to C-terminus: 3-isopropylmalate dehydratase small subunit (212 aa).

This sequence belongs to the LeuD family. LeuD type 1 subfamily. In terms of assembly, heterodimer of LeuC and LeuD.

It carries out the reaction (2R,3S)-3-isopropylmalate = (2S)-2-isopropylmalate. It participates in amino-acid biosynthesis; L-leucine biosynthesis; L-leucine from 3-methyl-2-oxobutanoate: step 2/4. In terms of biological role, catalyzes the isomerization between 2-isopropylmalate and 3-isopropylmalate, via the formation of 2-isopropylmaleate. In Dechloromonas aromatica (strain RCB), this protein is 3-isopropylmalate dehydratase small subunit.